The primary structure comprises 911 residues: Brevican core protein (911 aa).

The first 22 residues, 1–22, serve as a signal peptide directing secretion; it reads MAQLFLPLLAALVLAQAPAALA. The 120-residue stretch at 36 to 155 folds into the Ig-like V-type domain; it reads RVRIAGDAPL…SSDAVEVKVK (120 aa). 5 disulfides stabilise this stretch: Cys-57–Cys-137, Cys-179–Cys-250, Cys-203–Cys-224, Cys-277–Cys-352, and Cys-301–Cys-322. Residue Asn-130 is glycosylated (N-linked (GlcNAc...) asparagine). Link domains lie at 157–252 and 257–354; these read VVFL…YCYA and GELF…YCFR. An N-linked (GlcNAc...) asparagine glycan is attached at Asn-337. The interval 391–641 is disordered; the sequence is QLPQEATESE…PTDSASRGGV (251 aa). Ser-418 is modified (phosphoserine). An O-linked (Xyl...) (chondroitin sulfate) serine glycan is attached at Ser-418. Over residues 454–478 the composition is skewed to acidic residues; it reads EEEEKYEDEEEKEEEEEEEEVEDEA. 2 O-glycosylated at two sites regions span residues 520-530 and 540-545; these read SPLPDGESEAS and TETLPT. Positions 569–575 are O-glycosylated at one site; sequence TGGPELS. Over residues 612–627 the composition is skewed to polar residues; that stretch reads EDNSGRTAPAGTSVQA. Ala-646 carries the GPI-anchor amidated alanine lipid modification. In terms of domain architecture, EGF-like spans 646 to 682; the sequence is ASGDCVPSPCHNGGTCLEEEEGVRCLCLPGYGGDLCD. 8 disulfides stabilise this stretch: Cys-650/Cys-661, Cys-655/Cys-670, Cys-672/Cys-681, Cys-688/Cys-699, Cys-716/Cys-808, Cys-784/Cys-800, Cys-815/Cys-858, and Cys-844/Cys-871. In terms of domain architecture, C-type lectin spans 695–809; the sequence is FQGACYKHFS…CNYHLSYTCK (115 aa). The 61-residue stretch at 813 to 873 folds into the Sushi domain; that stretch reads VSCGPPPELP…WEAPQISCVP (61 aa). O-linked (GalNAc...) serine glycans are attached at residues Ser-905 and Ser-906.

It belongs to the aggrecan/versican proteoglycan family. In terms of assembly, interacts with TNR. O-glycosylated; contains chondroitin sulfate. O-glycosylated with a core 1 or possibly core 8 glycan. In terms of tissue distribution, expressed in the retina, specifically in the inner nuclear layer, inner plexiform layer and ganglion cell layer (at protein level). Detected in cerebrospinal fluid (at protein level). Detected in urine (at protein level).

Its subcellular location is the secreted. It localises to the extracellular space. The protein resides in the extracellular matrix. The protein localises to the membrane. In terms of biological role, may play a role in the terminally differentiating and the adult nervous system during postnatal development. Could stabilize interactions between hyaluronan (HA) and brain proteoglycans. This is Brevican core protein (BCAN) from Homo sapiens (Human).